A 310-amino-acid polypeptide reads, in one-letter code: UDP-N-acetylenolpyruvoylglucosamine reductase (310 aa).

One can recognise an FAD-binding PCMH-type domain in the interval 35 to 199 (VGGPAQALFT…TSARFRGTPA (165 aa)). Residue R179 is part of the active site. The Proton donor role is filled by S228. E298 is an active-site residue.

This sequence belongs to the MurB family. The cofactor is FAD.

The protein resides in the cytoplasm. The enzyme catalyses UDP-N-acetyl-alpha-D-muramate + NADP(+) = UDP-N-acetyl-3-O-(1-carboxyvinyl)-alpha-D-glucosamine + NADPH + H(+). The protein operates within cell wall biogenesis; peptidoglycan biosynthesis. Functionally, cell wall formation. This Rhodopseudomonas palustris (strain BisB5) protein is UDP-N-acetylenolpyruvoylglucosamine reductase.